We begin with the raw amino-acid sequence, 340 residues long: MKITLFSSKPYWVKWFNELNKFSYEINYVTSACDIKSVNEAKGSEAVCCFVNDDLSKEVIETLHSNGTKVILMRCAGFNKVDLDTANKLGIPVLRVPAYSPNAVSEYALSLIMALNRKTHKAHDRVRDANFEINGMEGFNMVSKVYGIVGTGNIGEQLCRVLKLGFGAKVIAYDIIENKAVTDIGIEYVKTLDEIWKQCDVISLHTPLNSQTKYMVNSESIEKMRDGVMIINVSRGALVNASDAIVGLKSGKISSLGMDVYENETDYFYQDHNGSIIKDDNLSLLISYPNVMITSHQAWYTKEAISCICGTSLQNFVDFRSNQIKKSNLVNNPISSQPTQ.

Residues 153 to 154, Asp174, 206 to 207, 233 to 235, and Asp259 contribute to the NAD(+) site; these read NI, TP, and VSR. Arg235 is a catalytic residue. Residue Glu264 is part of the active site. The active-site Proton donor is the His296.

Belongs to the D-isomer specific 2-hydroxyacid dehydrogenase family.

The enzyme catalyses (R)-lactate + NAD(+) = pyruvate + NADH + H(+). The sequence is that of Putative D-lactate dehydrogenase (ldhA) from Dictyostelium discoideum (Social amoeba).